We begin with the raw amino-acid sequence, 293 residues long: ATP synthase gamma chain (293 aa).

Belongs to the ATPase gamma chain family. In terms of assembly, F-type ATPases have 2 components, CF(1) - the catalytic core - and CF(0) - the membrane proton channel. CF(1) has five subunits: alpha(3), beta(3), gamma(1), delta(1), epsilon(1). CF(0) has three main subunits: a, b and c.

The protein resides in the cell inner membrane. Functionally, produces ATP from ADP in the presence of a proton gradient across the membrane. The gamma chain is believed to be important in regulating ATPase activity and the flow of protons through the CF(0) complex. The protein is ATP synthase gamma chain of Gluconacetobacter diazotrophicus (strain ATCC 49037 / DSM 5601 / CCUG 37298 / CIP 103539 / LMG 7603 / PAl5).